The primary structure comprises 137 residues: MRLRVVAVGRPRLAYARLGVEEYARRMRRYAPLDLVFVRKGEELLPKAEGHRKVVLDERGRLLTTEELYRRLLVWEGERVAFLVGGAEGHPEAVREEADLLLSLSPLTLQHELALLVLMEQLYRVLTLRAGHPYHRP.

S-adenosyl-L-methionine contacts are provided by residues leucine 56, glycine 85, and 104–109 (LSPLTL).

Belongs to the RNA methyltransferase RlmH family. As to quaternary structure, homodimer.

Its subcellular location is the cytoplasm. It carries out the reaction pseudouridine(1915) in 23S rRNA + S-adenosyl-L-methionine = N(3)-methylpseudouridine(1915) in 23S rRNA + S-adenosyl-L-homocysteine + H(+). In terms of biological role, specifically methylates the pseudouridine at position 1915 (m3Psi1915) in 23S rRNA. In Thermus thermophilus (strain ATCC BAA-163 / DSM 7039 / HB27), this protein is Ribosomal RNA large subunit methyltransferase H.